The primary structure comprises 670 residues: Neutral ceramidase (670 aa).

The N-terminal stretch at 1-24 (MSRSAFTALLLSCVLLALSMPARA) is a signal peptide. Position 61 (His61) interacts with Mg(2+). Substrate contacts are provided by Asn84, Gln92, and Asp111. A Zn(2+)-binding site is contributed by His121. Ser130 is a substrate binding site. His228 lines the Zn(2+) pocket. Ser274 acts as the Nucleophile in catalysis. Cys346 and Cys394 are joined by a disulfide. Glu435 is a binding site for Zn(2+). Tyr469 provides a ligand contact to substrate. Tyr472 contributes to the Zn(2+) binding site. Positions 603, 605, and 608 each coordinate Mg(2+). The segment at 644–670 (NAKNFWTQKISEIGGSTRSFEVLGTTP) is required for correct folding and localization.

It belongs to the neutral ceramidase family. Homodimer. It depends on Zn(2+) as a cofactor. Requires Mg(2+) as cofactor.

It localises to the secreted. The catalysed reaction is an N-acylsphing-4-enine + H2O = sphing-4-enine + a fatty acid. Inhibited by EDTA, EGTA and D/L-sphinganine D-erythro-sphingosine. L-erythro-sphingosine is a less powerful inhibitor. Stimulated by glycerophospholipids: cardiolipin is the most effective, followed by phosphatidic acid, phosphatidylethanolamine and phosphatidylglycerol, whereas phosphatidylcholine, lysophosphatidic acid and diacylglycerol are less effective. In terms of biological role, catalyzes the cleavage of the N-acyl linkage of the ceramides (Cers) to yield sphingosine (Sph) and free fatty acid at an optimal pH of 8-9. Also catalyzes the synthesis of Cers from Sph and fatty acid. In Pseudomonas aeruginosa (strain ATCC 15692 / DSM 22644 / CIP 104116 / JCM 14847 / LMG 12228 / 1C / PRS 101 / PAO1), this protein is Neutral ceramidase.